A 341-amino-acid chain; its full sequence is HTH-type transcriptional repressor PurR (341 aa).

Residues 2 to 56 (ATIKDVAKRANVSTTTVSHVINKTRFVAEETRNAVWAAIKELHYSPSAVARSLKV) enclose the HTH lacI-type domain. Residues 4 to 23 (IKDVAKRANVSTTTVSHVIN) constitute a DNA-binding region (H-T-H motif). Residues 48–56 (SAVARSLKV) mediate DNA binding. Hypoxanthine-binding residues include Tyr-73, Arg-190, Thr-192, Phe-221, and Asp-275.

As to quaternary structure, homodimer.

It functions in the pathway purine metabolism; purine nucleotide biosynthesis [regulation]. Functionally, is the main repressor of the genes involved in the de novo synthesis of purine nucleotides, regulating purB, purC, purEK, purF, purHD, purL, purMN and guaBA expression. PurR is allosterically activated to bind its cognate DNA by binding the purine corepressors, hypoxanthine or guanine, thereby effecting transcription repression. The polypeptide is HTH-type transcriptional repressor PurR (Shigella sonnei (strain Ss046)).